Consider the following 79-residue polypeptide: RNA-binding protein Hfq (79 aa).

Residues 10 to 70 (DAFLNHVRKT…ISTIMPAQPI (61 aa)) form the Sm domain.

The protein belongs to the Hfq family. Homohexamer.

In terms of biological role, RNA chaperone that binds small regulatory RNA (sRNAs) and mRNAs to facilitate mRNA translational regulation in response to envelope stress, environmental stress and changes in metabolite concentrations. Also binds with high specificity to tRNAs. The sequence is that of RNA-binding protein Hfq from Ruegeria sp. (strain TM1040) (Silicibacter sp.).